The primary structure comprises 173 residues: uncharacterized protein (173 aa).

Residues 80-107 (HSATVKRTDSSHRLKSHVVDKRPRRSLD) are disordered. Residues 85–107 (KRTDSSHRLKSHVVDKRPRRSLD) show a composition bias toward basic and acidic residues.

This is an uncharacterized protein from Autographa californica nuclear polyhedrosis virus (AcMNPV).